The following is a 104-amino-acid chain: Large ribosomal subunit protein cL38 (104 aa).

The N-terminal 39 residues, 1–39 (MASVSSIFGCGVSMAPNSSLRNKAIRTERRSACGGLLIE), are a transit peptide targeting the chloroplast. The disordered stretch occupies residues 42–76 (SRPQKKSTAHHMKTRPRKSRLSDRNRKPTVYAPLP). The segment covering 44–60 (PQKKSTAHHMKTRPRKS) has biased composition (basic residues).

Belongs to the chloroplast-specific ribosomal protein cL38 family. Part of the 50S ribosomal subunit.

Its subcellular location is the plastid. It is found in the chloroplast. This chain is Large ribosomal subunit protein cL38 (PSRP6), found in Pisum sativum (Garden pea).